The chain runs to 372 residues: DNA polymerase delta subunit 3 (372 aa).

Disordered regions lie at residues 156-264 (KKAP…NLDS) and 352-372 (KKNTAQSKPQQKSIMSFFGKK). The segment covering 160–173 (STHSPQLSVPSKTS) has biased composition (polar residues). Ser-163 carries the phosphoserine modification. 2 stretches are compositionally biased toward basic and acidic residues: residues 174 to 190 (TIDKTDTRSTEKTKGKD) and 209 to 239 (APLENHKEKEPLLPKEEKLSEQAKRERDDLK). Positions 355–365 (TAQSKPQQKSI) are enriched in polar residues.

As to quaternary structure, heterotetramer that consist of the pol3, cdc1, cdc27 and cdm1 subunits. Cdc27 interacts with cdc1 and is required for dimerization of the tetramer.

Its subcellular location is the nucleus. This chain is DNA polymerase delta subunit 3 (cdc27), found in Schizosaccharomyces pombe (strain 972 / ATCC 24843) (Fission yeast).